The chain runs to 345 residues: Tyrosine--tRNA ligase (345 aa).

Tyr36 is an L-tyrosine binding site. A 'HIGH' region motif is present at residues 41–49; the sequence is PTGEMHIGH. Positions 163, 167, 170, and 185 each coordinate L-tyrosine.

This sequence belongs to the class-I aminoacyl-tRNA synthetase family. TyrS type 3 subfamily. In terms of assembly, homodimer.

The protein resides in the cytoplasm. It catalyses the reaction tRNA(Tyr) + L-tyrosine + ATP = L-tyrosyl-tRNA(Tyr) + AMP + diphosphate + H(+). Catalyzes the attachment of tyrosine to tRNA(Tyr) in a two-step reaction: tyrosine is first activated by ATP to form Tyr-AMP and then transferred to the acceptor end of tRNA(Tyr). This is Tyrosine--tRNA ligase from Natronomonas pharaonis (strain ATCC 35678 / DSM 2160 / CIP 103997 / JCM 8858 / NBRC 14720 / NCIMB 2260 / Gabara) (Halobacterium pharaonis).